We begin with the raw amino-acid sequence, 151 residues long: Multiprotein-bridging factor 1 (151 aa).

The segment at 1–32 is disordered; that stretch reads MSSDWDSVTIIGQKARVGGGGPRENVAKTSSQ. An HTH cro/C1-type domain is found at 86–140; that stretch reads IQQARQEKKLTQKELATKVNEKPNVINDYEAGRAIPNQQLLAKLERALGVKLRGK. The H-T-H motif DNA-binding region spans 97-116; that stretch reads QKELATKVNEKPNVINDYEA.

The protein belongs to the MBF1 family.

Its function is as follows. Transcriptional coactivator that stimulates GCN4-dependent transcriptional activity by bridging the DNA-binding region of GCN4 and TBP (SPT15), thereby recruiting TBP to GCN4-bound promoters. Involved in induction of the ribosome quality control (RQC) pathway; a pathway that degrades nascent peptide chains during problematic translation. Required to prevent stalled ribosomes from frameshifting. This is Multiprotein-bridging factor 1 (MBF1) from Candida albicans (strain SC5314 / ATCC MYA-2876) (Yeast).